Here is a 398-residue protein sequence, read N- to C-terminus: tRNA(Ile)-lysidine synthase (398 aa).

An ATP-binding site is contributed by 25 to 30; sequence SGGVDS.

It belongs to the tRNA(Ile)-lysidine synthase family.

It localises to the cytoplasm. It catalyses the reaction cytidine(34) in tRNA(Ile2) + L-lysine + ATP = lysidine(34) in tRNA(Ile2) + AMP + diphosphate + H(+). Functionally, ligates lysine onto the cytidine present at position 34 of the AUA codon-specific tRNA(Ile) that contains the anticodon CAU, in an ATP-dependent manner. Cytidine is converted to lysidine, thus changing the amino acid specificity of the tRNA from methionine to isoleucine. In Francisella tularensis subsp. tularensis (strain SCHU S4 / Schu 4), this protein is tRNA(Ile)-lysidine synthase.